The primary structure comprises 283 residues: Putative transposase InsK for insertion sequence element IS150 (283 aa).

The Integrase catalytic domain occupies 117 to 279; that stretch reads KATRPNEKWV…TPIEYRNQTY (163 aa).

Belongs to the transposase IS3/IS150/IS904 family.

Functionally, involved in the transposition of the insertion sequence IS150. The polypeptide is Putative transposase InsK for insertion sequence element IS150 (insK) (Escherichia coli (strain K12)).